Consider the following 352-residue polypeptide: C-C chemokine receptor type 5 (352 aa).

At 1-30 (MDYQTSTPLYDIDYGMSEPCQKLNVRQIAA) the chain is on the extracellular side. Y3 is subject to Sulfotyrosine. S6 is a glycosylation site (O-linked (GalNAc...) serine). A sulfotyrosine mark is found at Y10 and Y14. Disulfide bonds link C20/C269 and C101/C178. A helical transmembrane segment spans residues 31-58 (RLLPPLYSLVFIFGFVGNMLVVLILINC). Residues 59–68 (KKLKSMTDIY) are Cytoplasmic-facing. The helical transmembrane segment at 69 to 89 (LLNLAISDLLFIITIPFWAHY) threads the bilayer. Topologically, residues 90–102 (AADQWVFGNTMCQ) are extracellular. Residues 103–124 (LFTGFYFIGYFGGIFFIILLTI) form a helical membrane-spanning segment. Residues 125–141 (DRYLAIVHAVFALKART) lie on the Cytoplasmic side of the membrane. Residues 142-166 (VTFGAATSVVTWVVAVFASLPGIIF) traverse the membrane as a helical segment. Topologically, residues 167–198 (TKSQKEGSRHTCSPHFPSSQYHFWKNFQTLKI) are extracellular. The helical transmembrane segment at 199 to 218 (VILGLVLPLLVMIVCYSGII) threads the bilayer. The Cytoplasmic segment spans residues 219 to 235 (KTLLRCRNEKKKHKAVR). Residues 236–260 (LIFVIMIVYFLFWAPYNIVLLLSTF) traverse the membrane as a helical segment. Residues 261 to 277 (QEFFGLNNCSGSNRLDQ) are Extracellular-facing. A helical transmembrane segment spans residues 278–301 (AMQVTETLGMTHCCINPIIYAFVG). The Cytoplasmic segment spans residues 302–352 (EKFRNYLLRFFRKYFASRFCKGCPVFQGEAPERVSSVYTRSTGEQEISVGL). 2 S-palmitoyl cysteine lipidation sites follow: C321 and C324. A phosphoserine; by BARK1 mark is found at S336, S337, S342, and S349.

Belongs to the G-protein coupled receptor 1 family. In terms of assembly, interacts with PRAF2. Efficient ligand binding to CCL3/MIP-1alpha and CCL4/MIP-1beta requires sulfation, O-glycosylation and sialic acid modifications. Glycosylation on Ser-6 is required for efficient binding of CCL4. Interacts with GRK2. Interacts with ARRB1 and ARRB2. Interacts with CNIH4. Interacts with S100A4; this interaction stimulates T-lymphocyte chemotaxis. Sulfated on at least 2 of the N-terminal tyrosines. Sulfation is required for efficient binding of the chemokines, CCL3 and CCL4. In terms of processing, O-glycosylated, but not N-glycosylated. Ser-6 appears to be the major site. Also sialylated glycans present which contribute to chemokine binding. Ser-17 may also be glycosylated and, if so, with small moieties such as a T-antigen. Post-translationally, palmitoylation in the C-terminal is important for cell surface expression. Phosphorylation on serine residues in the C-terminal is stimulated by binding CC chemokines especially by APO-RANTES.

The protein resides in the cell membrane. Functionally, receptor for a number of inflammatory CC-chemokines including CCL3/MIP-1-alpha, CCL4/MIP-1-beta and RANTES and subsequently transduces a signal by increasing the intracellular calcium ion level. May play a role in the control of granulocytic lineage proliferation or differentiation. Participates in T-lymphocyte migration to the infection site by acting as a chemotactic receptor. This is C-C chemokine receptor type 5 (CCR5) from Bos taurus (Bovine).